The sequence spans 435 residues: MAKNVIVVGTQWGDEGKGKIVDWLTDHAKGVVRFQGGHNAGHTLVVGEQVYKLNLVPSGIVRDGVECYIGNGVVLDIHHLLSEIAELEKGGIDVRSRLKISPGCPLILPYHSAIDKARECAKSEDKKIGTTGKGIGPTYEDKVSRRGLRVYDLFNPERFAEKLKEVLEYHNFVLTQYFKAPAVDFQTVYDQAMADAEQIKPLVTDVSAALYAANKAGSNLLFEGAQGTLLDIDHGTYPFVTSSNCVAGQASAGAGIGPGMLHYVLGITKAYCTRVGGGPFPSELDIETEGAPGYQMSQVGREFGTVTGRKRRCGWFDAAALRRSGRINGLTGLCITKLDVLDGLKELNICTGYKLDGKIIDLLPIGADEVVRCEPIYETMPGWTDTTFGVKRWEDLPVNAQSYLNRLEVLCEVPIAIVSTGPERDETILKQHPFK.

Residues 13 to 19 and 41 to 43 each bind GTP; these read GDEGKGK and GHT. D14 serves as the catalytic Proton acceptor. Residues D14 and G41 each coordinate Mg(2+). Residues 14 to 17, 39 to 42, T131, R145, Q226, T241, and R309 contribute to the IMP site; these read DEGK and NAGH. H42 acts as the Proton donor in catalysis. 305–311 provides a ligand contact to substrate; that stretch reads TVTGRKR. GTP-binding positions include R311, 337–339, and 419–421; these read KLD and STG.

The protein belongs to the adenylosuccinate synthetase family. As to quaternary structure, homodimer. Mg(2+) is required as a cofactor.

The protein resides in the cytoplasm. The catalysed reaction is IMP + L-aspartate + GTP = N(6)-(1,2-dicarboxyethyl)-AMP + GDP + phosphate + 2 H(+). It functions in the pathway purine metabolism; AMP biosynthesis via de novo pathway; AMP from IMP: step 1/2. Its function is as follows. Plays an important role in the de novo pathway of purine nucleotide biosynthesis. Catalyzes the first committed step in the biosynthesis of AMP from IMP. The polypeptide is Adenylosuccinate synthetase (Dechloromonas aromatica (strain RCB)).